The sequence spans 320 residues: Porphobilinogen deaminase (320 aa).

Cys-241 is modified (S-(dipyrrolylmethanemethyl)cysteine).

The protein belongs to the HMBS family. In terms of assembly, monomer. Dipyrromethane serves as cofactor.

It catalyses the reaction 4 porphobilinogen + H2O = hydroxymethylbilane + 4 NH4(+). It functions in the pathway porphyrin-containing compound metabolism; protoporphyrin-IX biosynthesis; coproporphyrinogen-III from 5-aminolevulinate: step 2/4. Tetrapolymerization of the monopyrrole PBG into the hydroxymethylbilane pre-uroporphyrinogen in several discrete steps. This is Porphobilinogen deaminase from Thermobifida fusca (strain YX).